The sequence spans 235 residues: Probable inactive serine protease 37 (235 aa).

The signal sequence occupies residues 1-19 (MKYVFYLGVLAGTFFFADS). The Peptidase S1 domain occupies 20–233 (SVQKEDPAPY…YVSWIENTAK (214 aa)). 3 disulfides stabilise this stretch: Cys40/Cys56, Cys131/Cys198, and Cys163/Cys177.

It belongs to the peptidase S1 family. As to expression, testis-specific. Expressed in spermatids (at protein level).

The protein localises to the cytoplasmic vesicle. Its subcellular location is the secretory vesicle. It localises to the acrosome. The protein resides in the secreted. Functionally, plays a role in male fertility. May have a role in sperm migration or binding to zona-intact eggs. Involved in the activation of the proacrosin/acrosin system. The polypeptide is Probable inactive serine protease 37 (Homo sapiens (Human)).